Reading from the N-terminus, the 559-residue chain is T-complex protein 1 subunit gamma (559 aa).

A disulfide bridge links cysteine 369 with cysteine 375. The disordered stretch occupies residues 537–559 (GGASVTDGNGQEIPETFGDARDG).

It belongs to the TCP-1 chaperonin family. In terms of assembly, heterooligomeric complex of about 850 to 900 kDa that forms two stacked rings, 12 to 16 nm in diameter.

Its subcellular location is the cytoplasm. Molecular chaperone; assists the folding of proteins upon ATP hydrolysis. Known to play a role, in vitro, in the folding of actin and tubulin. The chain is T-complex protein 1 subunit gamma from Tetrahymena pyriformis.